The sequence spans 625 residues: DNA polymerase DpoZ (625 aa).

The segment at 324-345 (NQTKGETGGDDSGTEGTGTGRL) is disordered.

The protein belongs to the DNA polymerase type-A family. DpoZ subfamily.

It carries out the reaction DNA(n) + a 2'-deoxyribonucleoside 5'-triphosphate = DNA(n+1) + diphosphate. The enzyme catalyses dZTP + DNA(n) = DNA(n)-Z + diphosphate. Functionally, DNA polymerase that preferentially incorporates the non-canonical base aminoadenine/dZTP instead of adenine into the synthesized DNA. More efficient in using dZTP instead of dATP as a substrate. In addition to this preference for dZTP, the phage also encodes a dATP triphosphohydrolase that removes dATP and its precursor dADP from the nucleotide pool of the host. In Salmonella enterica (Salmonella choleraesuis), this protein is DNA polymerase DpoZ (dpoZ).